The chain runs to 224 residues: Vesicle transport through interaction with t-SNAREs homolog 1A (224 aa).

At 1 to 199 the chain is on the cytoplasmic side; that stretch reads MSADFEGYEQ…GMLRRIIQNR (199 aa). Coiled-coil stretches lie at residues 31 to 92 and 106 to 185; these read PDEK…KRSR and DAGN…GKSS. A helical; Anchor for type IV membrane protein membrane pass occupies residues 200–220; it reads ILLVILGIIVVITILTAITFF. Residues 221 to 224 lie on the Vesicular side of the membrane; the sequence is VRGH.

This sequence belongs to the VTI1 family. In terms of assembly, interacts with distinct SNARE complexes that contain either STX5 or STX6. Interacts with NAPA and, to a lesser extent, with NAPG. Identified in a complex containing STX6, STX12, VAMP4 and VTI1A. As to expression, specifically expressed in the neuronal tissues cerebellum, cortex and hippocampus. Isoform 1/VTI1A is expressed in the same neuronal tissues but also in lung, liver, kidney and spleen.

It localises to the membrane. Its subcellular location is the cytoplasmic vesicle. The protein localises to the secretory vesicle. The protein resides in the synaptic vesicle membrane. It is found in the clathrin-coated vesicle membrane. It localises to the golgi apparatus membrane. Its function is as follows. V-SNARE that mediates vesicle transport pathways through interactions with t-SNAREs on the target membrane. These interactions are proposed to mediate aspects of the specificity of vesicle trafficking and to promote fusion of the lipid bilayers. Involved in vesicular transport from the late endosomes to the trans-Golgi network. Along with VAMP7, involved in an non-conventional RAB1-dependent traffic route to the cell surface used by KCNIP1 and KCND2. May be concerned with increased secretion of cytokines associated with cellular senescence. The sequence is that of Vesicle transport through interaction with t-SNAREs homolog 1A (Vti1a) from Rattus norvegicus (Rat).